Consider the following 199-residue polypeptide: Holliday junction branch migration complex subunit RuvA (199 aa).

Positions 1 to 64 (MFAYIKGTVE…EDIAVLYGFG (64 aa)) are domain I. Residues 65–143 (TVEELTMFEM…KEQLTSSIPM (79 aa)) form a domain II region. The tract at residues 144-151 (TSPENNEV) is flexible linker. Residues 152-199 (TGDSVLSEAVSALMVLGYGSAEASSTISGIYEKGISVEELVKKALKSL) form a domain III region.

It belongs to the RuvA family. Homotetramer. Forms an RuvA(8)-RuvB(12)-Holliday junction (HJ) complex. HJ DNA is sandwiched between 2 RuvA tetramers; dsDNA enters through RuvA and exits via RuvB. An RuvB hexamer assembles on each DNA strand where it exits the tetramer. Each RuvB hexamer is contacted by two RuvA subunits (via domain III) on 2 adjacent RuvB subunits; this complex drives branch migration. In the full resolvosome a probable DNA-RuvA(4)-RuvB(12)-RuvC(2) complex forms which resolves the HJ.

The protein localises to the cytoplasm. The RuvA-RuvB-RuvC complex processes Holliday junction (HJ) DNA during genetic recombination and DNA repair, while the RuvA-RuvB complex plays an important role in the rescue of blocked DNA replication forks via replication fork reversal (RFR). RuvA specifically binds to HJ cruciform DNA, conferring on it an open structure. The RuvB hexamer acts as an ATP-dependent pump, pulling dsDNA into and through the RuvAB complex. HJ branch migration allows RuvC to scan DNA until it finds its consensus sequence, where it cleaves and resolves the cruciform DNA. The protein is Holliday junction branch migration complex subunit RuvA of Ruminiclostridium cellulolyticum (strain ATCC 35319 / DSM 5812 / JCM 6584 / H10) (Clostridium cellulolyticum).